An 80-amino-acid polypeptide reads, in one-letter code: uncharacterized protein (80 aa).

This is an uncharacterized protein from Pseudoalteromonas phage PM2 (Bacteriophage PM2).